We begin with the raw amino-acid sequence, 283 residues long: 4-diphosphocytidyl-2-C-methyl-D-erythritol kinase (283 aa).

K12 is a catalytic residue. 94–104 (PAQAGLGGGSS) contacts ATP. D136 is a catalytic residue.

The protein belongs to the GHMP kinase family. IspE subfamily.

It carries out the reaction 4-CDP-2-C-methyl-D-erythritol + ATP = 4-CDP-2-C-methyl-D-erythritol 2-phosphate + ADP + H(+). Its pathway is isoprenoid biosynthesis; isopentenyl diphosphate biosynthesis via DXP pathway; isopentenyl diphosphate from 1-deoxy-D-xylulose 5-phosphate: step 3/6. Its function is as follows. Catalyzes the phosphorylation of the position 2 hydroxy group of 4-diphosphocytidyl-2C-methyl-D-erythritol. This chain is 4-diphosphocytidyl-2-C-methyl-D-erythritol kinase, found in Acidovorax sp. (strain JS42).